The sequence spans 287 residues: Inorganic pyrophosphatase (287 aa).

Arg-79 contributes to the diphosphate binding site. The Mg(2+) site is built by Asp-116, Asp-121, and Asp-153.

The protein belongs to the PPase family. Mg(2+) serves as cofactor.

It localises to the cytoplasm. The catalysed reaction is diphosphate + H2O = 2 phosphate + H(+). The polypeptide is Inorganic pyrophosphatase (IPP1) (Eremothecium gossypii (strain ATCC 10895 / CBS 109.51 / FGSC 9923 / NRRL Y-1056) (Yeast)).